A 216-amino-acid chain; its full sequence is Probable transaldolase (216 aa).

Catalysis depends on lysine 84, which acts as the Schiff-base intermediate with substrate.

Belongs to the transaldolase family. Type 3B subfamily.

Its subcellular location is the cytoplasm. It catalyses the reaction D-sedoheptulose 7-phosphate + D-glyceraldehyde 3-phosphate = D-erythrose 4-phosphate + beta-D-fructose 6-phosphate. Its pathway is carbohydrate degradation; pentose phosphate pathway; D-glyceraldehyde 3-phosphate and beta-D-fructose 6-phosphate from D-ribose 5-phosphate and D-xylulose 5-phosphate (non-oxidative stage): step 2/3. Its function is as follows. Transaldolase is important for the balance of metabolites in the pentose-phosphate pathway. The protein is Probable transaldolase of Exiguobacterium sp. (strain ATCC BAA-1283 / AT1b).